Reading from the N-terminus, the 1400-residue chain is DNA topoisomerase 2 (1400 aa).

Over residues 1 to 30 (MSSFESDSASDAESAFSDASSDFTPSSSVK) the composition is skewed to low complexity. The interval 1–57 (MSSFESDSASDAESAFSDASSDFTPSSSVKSKGKVPLRDSTNTTAQPSAPATGDASD) is disordered. Over residues 39 to 57 (DSTNTTAQPSAPATGDASD) the composition is skewed to polar residues. ATP-binding positions include Asn-117, Asn-146, 174 to 176 (SSN), and 187 to 194 (GRNGYGAK). The tract at residues 379 to 386 (TKKEKGKK) is interaction with DNA. 415–417 (QTK) contributes to the ATP binding site. The region spanning 497-613 (CTLILTEGDS…GLLEIPGFLL (117 aa)) is the Toprim domain. Mg(2+)-binding residues include Glu-503, Asp-582, and Asp-584. Positions 749–1214 (IPSILDGFKP…SAKDLWNSDL (466 aa)) constitute a Topo IIA-type catalytic domain. The active-site O-(5'-phospho-DNA)-tyrosine intermediate is Tyr-839. The tract at residues 1019–1028 (KLISSISLSN) is interaction with DNA. Residues 1235 to 1400 (FGPTAKTSTR…NESDEDYMSE (166 aa)) form a disordered region. A compositionally biased stretch (low complexity) spans 1262–1271 (SSTPKASTPT). Basic residues predominate over residues 1312–1321 (PKRKTPKSKP). A compositionally biased stretch (acidic residues) spans 1389 to 1400 (DGNESDEDYMSE).

This sequence belongs to the type II topoisomerase family. As to quaternary structure, homodimer. Mg(2+) is required as a cofactor. Requires Mn(2+) as cofactor. It depends on Ca(2+) as a cofactor.

The protein localises to the nucleus. The enzyme catalyses ATP-dependent breakage, passage and rejoining of double-stranded DNA.. Control of topological states of DNA by transient breakage and subsequent rejoining of DNA strands. Topoisomerase II makes double-strand breaks. The chain is DNA topoisomerase 2 (TOP2) from Meyerozyma guilliermondii (strain ATCC 6260 / CBS 566 / DSM 6381 / JCM 1539 / NBRC 10279 / NRRL Y-324) (Yeast).